The following is a 76-amino-acid chain: Conotoxin VnMKLT2-013 (76 aa).

A signal peptide spans 1–23 (MMKLTCVLIIAVLFLTACQLTTA). Positions 24-42 (ETRDEYRAVRSSDEVQNSR) are excised as a propeptide. Residues 29-49 (YRAVRSSDEVQNSRSTDDCST) are disordered. 3 disulfide bridges follow: Cys47–Cys58, Cys52–Cys63, and Cys57–Cys72.

Belongs to the conotoxin O1 superfamily. Expressed by the venom duct.

Its subcellular location is the secreted. This Conus ventricosus (Mediterranean cone) protein is Conotoxin VnMKLT2-013.